The following is a 700-amino-acid chain: Lutropin-choriogonadotropic hormone receptor (700 aa).

An N-terminal signal peptide occupies residues 1–26 (MGRRVPALRQLLVLAMLVLKQSQLHS). Residues 27-362 (PELSGSRCPE…AFNPCEDIMG (336 aa)) are Extracellular-facing. An LRR 1 repeat occupies 52-75 (RAGLARLSLTYLPVKVIPSQAFRG). An N-linked (GlcNAc...) asparagine glycan is attached at N103. LRR repeat units lie at residues 126-150 (LPRL…KISS), 176-200 (MNNE…AFNG), and 225-248 (ATGP…GLES). 2 N-linked (GlcNAc...) asparagine glycosylation sites follow: N178 and N199. N295, N303, and N317 each carry an N-linked (GlcNAc...) asparagine glycan. A Sulfotyrosine modification is found at Y335. The chain crosses the membrane as a helical span at residues 363 to 390 (YAFLRVLIWLINILAIFGNLTVLFVLLT). Residues 391–399 (SRYKLTVPR) are Cytoplasmic-facing. Residues 400–422 (FLMCNLSFADFCMGLYLLLIASV) traverse the membrane as a helical segment. Residues 423–443 (DSQTKGQYYNHAIDWQTGSGC) lie on the Extracellular side of the membrane. C443 and C518 are oxidised to a cystine. A helical transmembrane segment spans residues 444 to 466 (SAAGFFTVFASELSVYTLTVITL). At 467-486 (ERWHTITYAVQLDQKLRLRH) the chain is on the cytoplasmic side. A helical membrane pass occupies residues 487-509 (AIPIMLGGWIFSTLMATLPLVGV). The Extracellular segment spans residues 510–529 (SSYMKVSICLPMDVESTLSQ). Residues 530–551 (VYILSILLLNAVAFVVICACYV) form a helical membrane-spanning segment. Residues 552–574 (RIYFAVQNPELTAPNKDTKIAKK) lie on the Cytoplasmic side of the membrane. The helical transmembrane segment at 575-598 (MAILIFTDFTCMAPISFFAISAAF) threads the bilayer. Residues 599-609 (KVPLITVTNSK) are Extracellular-facing. Residues 610–631 (VLLVLFYPVNSCANPFLYAVFT) traverse the membrane as a helical segment. Topologically, residues 632-700 (KAFQRDFFLL…QPTPPRVLIQ (69 aa)) are cytoplasmic. S-palmitoyl cysteine attachment occurs at residues C647 and C648.

The protein belongs to the G-protein coupled receptor 1 family. FSH/LSH/TSH subfamily. Post-translationally, sulfated.

Its subcellular location is the cell membrane. In terms of biological role, receptor for lutropin-choriogonadotropic hormone. The activity of this receptor is mediated by G proteins which activate adenylate cyclase. This chain is Lutropin-choriogonadotropic hormone receptor (Lhcgr), found in Mus musculus (Mouse).